Here is a 304-residue protein sequence, read N- to C-terminus: GTPase Era (304 aa).

The region spanning 11–186 (YCGFIAIVGR…LRKGVHHFPE (176 aa)) is the Era-type G domain. Positions 19–26 (GRPNVGKS) are G1. Residue 19 to 26 (GRPNVGKS) coordinates GTP. A G2 region spans residues 45-49 (QTTRH). Residues 66–69 (DTPG) form a G3 region. Residues 66–70 (DTPGL) and 128–131 (NKVD) each bind GTP. Residues 128–131 (NKVD) form a G4 region. The segment at 158-160 (ISA) is G5. Residues 210–287 (TGEELPYSVT…HLELWVKVKS (78 aa)) form the KH type-2 domain.

It belongs to the TRAFAC class TrmE-Era-EngA-EngB-Septin-like GTPase superfamily. Era GTPase family. Monomer.

The protein localises to the cytoplasm. It is found in the cell inner membrane. In terms of biological role, an essential GTPase that binds both GDP and GTP, with rapid nucleotide exchange. Plays a role in 16S rRNA processing and 30S ribosomal subunit biogenesis and possibly also in cell cycle regulation and energy metabolism. In Histophilus somni (strain 2336) (Haemophilus somnus), this protein is GTPase Era.